The chain runs to 202 residues: MSVITSNPWSMVLAIFVINVFYVTFLTMRTILTLKGYRYMAAAVSFLEVLVYVVGLGMVMSSLDQIQNIFAYAFGFSIGILVGMKIEEKLALGYTVVNVTSSEYEIDLPNELRNLGYGVTHYAAHGRDGSRMVMQILTPRRYERKLMETVRNLDEKAFIIAYEPRAIHGGFWTKGVRTRKVKAYEVEEIESVVEHDDEVQSK.

Helical transmembrane passes span 8-28 (PWSM…FLTM), 40-60 (MAAA…GMVM), and 66-86 (IQNI…GMKI).

Belongs to the UPF0316 family.

The protein resides in the cell membrane. This chain is UPF0316 protein SH1041, found in Staphylococcus haemolyticus (strain JCSC1435).